The chain runs to 150 residues: Large ribosomal subunit protein uL13 (150 aa).

Belongs to the universal ribosomal protein uL13 family. In terms of assembly, part of the 50S ribosomal subunit.

In terms of biological role, this protein is one of the early assembly proteins of the 50S ribosomal subunit, although it is not seen to bind rRNA by itself. It is important during the early stages of 50S assembly. This Chlamydia caviae (strain ATCC VR-813 / DSM 19441 / 03DC25 / GPIC) (Chlamydophila caviae) protein is Large ribosomal subunit protein uL13.